The sequence spans 463 residues: Putative protein FAM90A2P (463 aa).

Disordered regions lie at residues 1–42 (MTAR…DPRL), 67–115 (ALVP…PQRK), 150–295 (MPVH…PAQA), and 326–365 (ALENLQPPPAATELGPSTSPQMGRRTPAQVPGVDRQPPHS). Composition is skewed to basic and acidic residues over residues 74-83 (GKKEGKENLK), 97-114 (NKDKGEKEERPRQQDPQR), and 159-170 (PCVDPELADRSA). The segment covering 180-198 (LASLSPLRKASLRSSSSLG) has biased composition (low complexity).

This sequence belongs to the FAM90 family.

In Homo sapiens (Human), this protein is Putative protein FAM90A2P (FAM90A2P).